Here is an 84-residue protein sequence, read N- to C-terminus: Toxin NvePTx1 (84 aa).

An N-terminal signal peptide occupies residues 1 to 21 (MFSARLVLVFAVVLCIQLCNA). Residues 22-34 (SWLDERAMTQEKR) constitute a propeptide that is removed on maturation.

This sequence belongs to the sea anemone type 5 potassium channel toxin family. In terms of processing, contains 4 disulfide bonds. In terms of tissue distribution, in unfertilized eggs and early post-fertilization stages, is expressed uniformly. In gastrulae, the expression becomes spatially-localized and seems to be absent from the oral and aboral poles. In planulae, the expression is clearly observed in the ectoderm in packed gland cells absent from the two body poles, and upon metamorphosis, the expression diminishes. There is two types of gland cells, one large and elongated and another small and round. This toxin is maternally deposited at both protein and RNA levels.

It is found in the secreted. Its subcellular location is the nematocyst. Neurotoxin that is probably only defensive. Acts as a voltage-gated potassium channel (Kv) inhibitor. In vivo, induces a rapid increase in swimming speed on zebrafish larvae, as well as death which occurs between 2 and 18 hours later. The protein is Toxin NvePTx1 of Nematostella vectensis (Starlet sea anemone).